The sequence spans 882 residues: MAEHSAPALEIDPKYGPFDKHTPMMQQYLKLKSAHPHTLVFYRMGDFYELFFEDAEKAARLLDITLTSRGTTNGQPIRMAGVPFHAVEQYLAKLVKLGESVAICEQIGDPATTKGPVERKVVRVVTPGTLTDAALLSDKVNNHLLAIAQIPGKRGAAPLVGLAWLNLVGGELRLMECSAEQLDRELERIRPAEVLADDATLNAVAFDVARTRLPDWHFDVEAGARRLREQLGVASLVAFGCETLTAALAAAGALLNYAAATQGQSLRHVIGLTVEHESEFIGLDTATRRNLELTETLRGQESPTLFSLLDTCATSMGSRLLRHWLHHPLRDRAVPQARQQAIEVLLAGDWQSLRGTLRTLSDVERITGRLALLSARPRDLSSLRDTLARLPEVRDQLPQSDDAQLLGDLHAALAIPEDAHALLQRAVMAEPAAMVRDGGVIARGYDADLDELRDISENCGQFLVDLEARERERTGIANLRVEYNRVHGFYIEVTNGQAAKVPDDYRRRQTLKNAERYITPELKAFEDKALSAQDRALSREKYLYEDLLQKLLPHLPVLKRIAAALAQADVLATLAERAHALSWSRPALTDAPGIELIRARHPVVEQQVEQFVANDCVLQETRKLLLITGPNMGGKSTFMRQTALVVLLAYVGAFVPADAATIGPIDRIFTRIGAADDLAGGRSTFMVEMTEAAAILHRATPNSLVLMDEIGRGTSTFDGLALAWAIARHLLSHNRSHTLFATHYFELTQLPQEFAQAANVHLSAVEHGDGIVFLHAVQEGPASQSYGLQVAQLAGVPQPVIRAARKRLAWLEQHSADTGATPQLDLFALPSDPSDDDAAEAAAPAAPSALAEALDGIDPDSMTPRDALDALYRLKALSDASA.

An ATP-binding site is contributed by 629–636 (GPNMGGKS).

Belongs to the DNA mismatch repair MutS family.

Functionally, this protein is involved in the repair of mismatches in DNA. It is possible that it carries out the mismatch recognition step. This protein has a weak ATPase activity. In Ralstonia nicotianae (strain ATCC BAA-1114 / GMI1000) (Ralstonia solanacearum), this protein is DNA mismatch repair protein MutS.